The chain runs to 64 residues: uncharacterized protein (64 aa).

This sequence to P.abyssi PAB3148.

This is an uncharacterized protein from Archaeoglobus fulgidus (strain ATCC 49558 / DSM 4304 / JCM 9628 / NBRC 100126 / VC-16).